The chain runs to 427 residues: 3-phosphoshikimate 1-carboxyvinyltransferase (427 aa).

The 3-phosphoshikimate site is built by K22, S23, and R27. K22 provides a ligand contact to phosphoenolpyruvate. Positions 96 and 124 each coordinate phosphoenolpyruvate. 7 residues coordinate 3-phosphoshikimate: S169, S170, Q171, S197, D313, N336, and K340. Q171 is a binding site for phosphoenolpyruvate. Catalysis depends on D313, which acts as the Proton acceptor. Phosphoenolpyruvate contacts are provided by R344, R386, and K411.

The protein belongs to the EPSP synthase family. Monomer.

It localises to the cytoplasm. The enzyme catalyses 3-phosphoshikimate + phosphoenolpyruvate = 5-O-(1-carboxyvinyl)-3-phosphoshikimate + phosphate. It functions in the pathway metabolic intermediate biosynthesis; chorismate biosynthesis; chorismate from D-erythrose 4-phosphate and phosphoenolpyruvate: step 6/7. Functionally, catalyzes the transfer of the enolpyruvyl moiety of phosphoenolpyruvate (PEP) to the 5-hydroxyl of shikimate-3-phosphate (S3P) to produce enolpyruvyl shikimate-3-phosphate and inorganic phosphate. The sequence is that of 3-phosphoshikimate 1-carboxyvinyltransferase from Escherichia coli O6:H1 (strain CFT073 / ATCC 700928 / UPEC).